Reading from the N-terminus, the 235-residue chain is MNISNPNGNRKAVVIFSGGQDSTTCLLQAIRDYGPNNVEAVTFQYGQRHAIELQKAQWIAQDLGVKQTLIDTSVIKTITTNAMMSDAQIKQDENGMPNTFVDGRNALFLLYAAIYAKGQGITDIITGVCETDFSGYPDCRNVFIKSMNVTLNLAMDYQFNIRTPLMYLTKAQTWQLADELGALDYVRQYTHTCYLGVEGGCGTCPSCLLREKGLKQYLAQKSAVEKSSVLTAKEA.

Position 16–26 (16–26 (FSGGQDSTTCL)) interacts with ATP. Positions 193, 201, 204, and 207 each coordinate Zn(2+).

Belongs to the QueC family. Zn(2+) is required as a cofactor.

It catalyses the reaction 7-carboxy-7-deazaguanine + NH4(+) + ATP = 7-cyano-7-deazaguanine + ADP + phosphate + H2O + H(+). The protein operates within purine metabolism; 7-cyano-7-deazaguanine biosynthesis. In terms of biological role, catalyzes the ATP-dependent conversion of 7-carboxy-7-deazaguanine (CDG) to 7-cyano-7-deazaguanine (preQ(0)). In Actinobacillus succinogenes (strain ATCC 55618 / DSM 22257 / CCUG 43843 / 130Z), this protein is 7-cyano-7-deazaguanine synthase.